The following is a 78-amino-acid chain: MTFLLLLVSVCMMATGEERTKRDVCELPFEEGPCFAAIRVYAYNAETGDCEQLTYGGCEGNGNRFATLEDCDNACARY.

The first 16 residues, 1–16 (MTFLLLLVSVCMMATG), serve as a signal peptide directing secretion. A propeptide spanning residues 17–20 (EERT) is cleaved from the precursor. The BPTI/Kunitz inhibitor domain maps to 25 to 75 (CELPFEEGPCFAAIRVYAYNAETGDCEQLTYGGCEGNGNRFATLEDCDNAC). Cystine bridges form between cysteine 25–cysteine 75, cysteine 34–cysteine 58, and cysteine 50–cysteine 71.

The protein belongs to the venom Kunitz-type family. In terms of tissue distribution, expressed by the venom duct.

It is found in the secreted. The sequence is that of Kunitz-type serine protease inhibitor conotoxin Cal9.1a from Californiconus californicus (California cone).